Reading from the N-terminus, the 352-residue chain is Quinolinate synthase (352 aa).

Iminosuccinate is bound by residues His-48 and Ser-69. A [4Fe-4S] cluster-binding site is contributed by Cys-114. Iminosuccinate-binding positions include 140–142 (YAN) and Ser-157. Residue Cys-201 participates in [4Fe-4S] cluster binding. Iminosuccinate-binding positions include 227-229 (HPE) and Thr-244. Cys-298 provides a ligand contact to [4Fe-4S] cluster.

It belongs to the quinolinate synthase family. Type 1 subfamily. [4Fe-4S] cluster serves as cofactor.

The protein localises to the cytoplasm. It catalyses the reaction iminosuccinate + dihydroxyacetone phosphate = quinolinate + phosphate + 2 H2O + H(+). It participates in cofactor biosynthesis; NAD(+) biosynthesis; quinolinate from iminoaspartate: step 1/1. Catalyzes the condensation of iminoaspartate with dihydroxyacetone phosphate to form quinolinate. The protein is Quinolinate synthase of Pseudomonas syringae pv. syringae (strain B728a).